The sequence spans 420 residues: Serine hydroxymethyltransferase (420 aa).

(6S)-5,6,7,8-tetrahydrofolate is bound by residues L121 and 125–127 (GHL). An N6-(pyridoxal phosphate)lysine modification is found at K230.

The protein belongs to the SHMT family. Homodimer. Pyridoxal 5'-phosphate serves as cofactor.

It is found in the cytoplasm. The catalysed reaction is (6R)-5,10-methylene-5,6,7,8-tetrahydrofolate + glycine + H2O = (6S)-5,6,7,8-tetrahydrofolate + L-serine. The protein operates within one-carbon metabolism; tetrahydrofolate interconversion. It participates in amino-acid biosynthesis; glycine biosynthesis; glycine from L-serine: step 1/1. In terms of biological role, catalyzes the reversible interconversion of serine and glycine with tetrahydrofolate (THF) serving as the one-carbon carrier. This reaction serves as the major source of one-carbon groups required for the biosynthesis of purines, thymidylate, methionine, and other important biomolecules. Also exhibits THF-independent aldolase activity toward beta-hydroxyamino acids, producing glycine and aldehydes, via a retro-aldol mechanism. This Streptomyces avermitilis (strain ATCC 31267 / DSM 46492 / JCM 5070 / NBRC 14893 / NCIMB 12804 / NRRL 8165 / MA-4680) protein is Serine hydroxymethyltransferase.